The primary structure comprises 430 residues: tRNA(Ile)-lysidine synthase (430 aa).

21 to 26 (SGGLDS) is a binding site for ATP.

Belongs to the tRNA(Ile)-lysidine synthase family.

It localises to the cytoplasm. The catalysed reaction is cytidine(34) in tRNA(Ile2) + L-lysine + ATP = lysidine(34) in tRNA(Ile2) + AMP + diphosphate + H(+). Functionally, ligates lysine onto the cytidine present at position 34 of the AUA codon-specific tRNA(Ile) that contains the anticodon CAU, in an ATP-dependent manner. Cytidine is converted to lysidine, thus changing the amino acid specificity of the tRNA from methionine to isoleucine. The protein is tRNA(Ile)-lysidine synthase of Salmonella dublin (strain CT_02021853).